The following is a 334-amino-acid chain: Probable N5-carboxyaminoimidazole ribonucleotide mutase (334 aa).

Positions 11, 14, and 41 each coordinate substrate.

Belongs to the AIR carboxylase family. Class I subfamily.

It carries out the reaction 5-carboxyamino-1-(5-phospho-D-ribosyl)imidazole + H(+) = 5-amino-1-(5-phospho-D-ribosyl)imidazole-4-carboxylate. It functions in the pathway purine metabolism; IMP biosynthesis via de novo pathway; 5-amino-1-(5-phospho-D-ribosyl)imidazole-4-carboxylate from 5-amino-1-(5-phospho-D-ribosyl)imidazole (N5-CAIR route): step 2/2. Catalyzes the conversion of N5-carboxyaminoimidazole ribonucleotide (N5-CAIR) to 4-carboxy-5-aminoimidazole ribonucleotide (CAIR). The polypeptide is Probable N5-carboxyaminoimidazole ribonucleotide mutase (Methanothermobacter thermautotrophicus (strain ATCC 29096 / DSM 1053 / JCM 10044 / NBRC 100330 / Delta H) (Methanobacterium thermoautotrophicum)).